Here is a 357-residue protein sequence, read N- to C-terminus: Glycerol-3-phosphate dehydrogenase [NAD(P)+] (357 aa).

4 residues coordinate NADPH: Ser-12, Trp-13, His-33, and Lys-115. Residues Lys-115, Gly-149, and Ser-151 each coordinate sn-glycerol 3-phosphate. Gly-153 provides a ligand contact to NADPH. Sn-glycerol 3-phosphate is bound by residues Lys-204, Asp-263, Arg-274, and Asn-275. Residue Lys-204 is the Proton acceptor of the active site. Arg-274 contacts NADPH. Positions 307 and 309 each coordinate NADPH.

Belongs to the NAD-dependent glycerol-3-phosphate dehydrogenase family.

It localises to the cytoplasm. The enzyme catalyses sn-glycerol 3-phosphate + NAD(+) = dihydroxyacetone phosphate + NADH + H(+). The catalysed reaction is sn-glycerol 3-phosphate + NADP(+) = dihydroxyacetone phosphate + NADPH + H(+). Its pathway is membrane lipid metabolism; glycerophospholipid metabolism. Functionally, catalyzes the reduction of the glycolytic intermediate dihydroxyacetone phosphate (DHAP) to sn-glycerol 3-phosphate (G3P), the key precursor for phospholipid synthesis. The polypeptide is Glycerol-3-phosphate dehydrogenase [NAD(P)+] (Treponema denticola (strain ATCC 35405 / DSM 14222 / CIP 103919 / JCM 8153 / KCTC 15104)).